The sequence spans 273 residues: NAD(P)H-hydrate epimerase (273 aa).

The region spanning 18–257 (ALKLDEDLIN…LLAMEYDVQE (240 aa)) is the YjeF N-terminal domain. A (6S)-NADPHX-binding site is contributed by 71–75 (NNGGD). 2 residues coordinate K(+): Asn-72 and Asp-146. (6S)-NADPHX-binding positions include 150–157 (GFSFHGGP), Tyr-162, and Asp-188. Residue Ser-191 participates in K(+) binding.

The protein belongs to the NnrE/AIBP family. K(+) is required as a cofactor.

It catalyses the reaction (6R)-NADHX = (6S)-NADHX. The enzyme catalyses (6R)-NADPHX = (6S)-NADPHX. Functionally, catalyzes the epimerization of the S- and R-forms of NAD(P)HX, a damaged form of NAD(P)H that is a result of enzymatic or heat-dependent hydration. This is a prerequisite for the S-specific NAD(P)H-hydrate dehydratase to allow the repair of both epimers of NAD(P)HX. This chain is NAD(P)H-hydrate epimerase, found in Giardia intestinalis (strain ATCC 50803 / WB clone C6) (Giardia lamblia).